A 295-amino-acid chain; its full sequence is tRNA dimethylallyltransferase (295 aa).

Position 9-16 (9-16 (GATATGKS)) interacts with ATP. Residue 11-16 (TATGKS) participates in substrate binding. Positions 34-37 (DSRQ) are interaction with substrate tRNA.

This sequence belongs to the IPP transferase family. In terms of assembly, monomer. Mg(2+) is required as a cofactor.

The enzyme catalyses adenosine(37) in tRNA + dimethylallyl diphosphate = N(6)-dimethylallyladenosine(37) in tRNA + diphosphate. Catalyzes the transfer of a dimethylallyl group onto the adenine at position 37 in tRNAs that read codons beginning with uridine, leading to the formation of N6-(dimethylallyl)adenosine (i(6)A). In Nostoc sp. (strain PCC 7120 / SAG 25.82 / UTEX 2576), this protein is tRNA dimethylallyltransferase.